The sequence spans 218 residues: Telomere repeats-binding bouquet formation protein 2 (218 aa).

The tract at residues 117–143 (HDRMASSDKENIRPTPEHKQELSKSAE) is disordered.

It belongs to the TERB2 family. As to quaternary structure, component of the MAJIN-TERB1-TERB2 complex, composed of MAJIN, TERB1 and TERB2. In terms of tissue distribution, specifically expressed in germline tissues.

It is found in the chromosome. Its subcellular location is the telomere. It localises to the nucleus inner membrane. Meiosis-specific telomere-associated protein involved in meiotic telomere attachment to the nucleus inner membrane, a crucial step for homologous pairing and synapsis. Component of the MAJIN-TERB1-TERB2 complex, which promotes telomere cap exchange by mediating attachment of telomeric DNA to the inner nuclear membrane and replacement of the protective cap of telomeric chromosomes: in early meiosis, the MAJIN-TERB1-TERB2 complex associates with telomeric DNA and the shelterin/telosome complex. During prophase, the complex matures and promotes release of the shelterin/telosome complex from telomeric DNA. This chain is Telomere repeats-binding bouquet formation protein 2, found in Mus musculus (Mouse).